A 318-amino-acid chain; its full sequence is Pyrimidine-specific ribonucleoside hydrolase RihA (318 aa).

His240 is an active-site residue.

The protein belongs to the IUNH family. RihA subfamily.

Functionally, hydrolyzes cytidine or uridine to ribose and cytosine or uracil, respectively. This Shewanella sp. (strain MR-7) protein is Pyrimidine-specific ribonucleoside hydrolase RihA.